Reading from the N-terminus, the 487-residue chain is N-succinylglutamate 5-semialdehyde dehydrogenase (487 aa).

221–226 (GSSDTG) contributes to the NAD(+) binding site. Residues Glu244 and Cys278 contribute to the active site.

This sequence belongs to the aldehyde dehydrogenase family. AstD subfamily.

The catalysed reaction is N-succinyl-L-glutamate 5-semialdehyde + NAD(+) + H2O = N-succinyl-L-glutamate + NADH + 2 H(+). The protein operates within amino-acid degradation; L-arginine degradation via AST pathway; L-glutamate and succinate from L-arginine: step 4/5. Its function is as follows. Catalyzes the NAD-dependent reduction of succinylglutamate semialdehyde into succinylglutamate. This is N-succinylglutamate 5-semialdehyde dehydrogenase from Burkholderia cenocepacia (strain ATCC BAA-245 / DSM 16553 / LMG 16656 / NCTC 13227 / J2315 / CF5610) (Burkholderia cepacia (strain J2315)).